Consider the following 449-residue polypeptide: Probable phosphoglucosamine mutase (449 aa).

Ser-96 functions as the Phosphoserine intermediate in the catalytic mechanism. Residues Ser-96, Asp-233, Asp-235, and Asp-237 each contribute to the Mg(2+) site. A Phosphoserine modification is found at Ser-96.

Belongs to the phosphohexose mutase family. Mg(2+) serves as cofactor. Activated by phosphorylation.

The catalysed reaction is alpha-D-glucosamine 1-phosphate = D-glucosamine 6-phosphate. Its function is as follows. Catalyzes the conversion of glucosamine-6-phosphate to glucosamine-1-phosphate. This Thermococcus gammatolerans (strain DSM 15229 / JCM 11827 / EJ3) protein is Probable phosphoglucosamine mutase.